We begin with the raw amino-acid sequence, 166 residues long: Large ribosomal subunit protein uL10 (166 aa).

This sequence belongs to the universal ribosomal protein uL10 family. Part of the ribosomal stalk of the 50S ribosomal subunit. The N-terminus interacts with L11 and the large rRNA to form the base of the stalk. The C-terminus forms an elongated spine to which L12 dimers bind in a sequential fashion forming a multimeric L10(L12)X complex.

Its function is as follows. Forms part of the ribosomal stalk, playing a central role in the interaction of the ribosome with GTP-bound translation factors. This chain is Large ribosomal subunit protein uL10 (rplJ), found in Streptococcus pyogenes serotype M1.